Reading from the N-terminus, the 375-residue chain is Growth/differentiation factor 8 (375 aa).

A signal peptide spans 1-18 (MQKLQIFVYIYLFVLIVA). Positions 19–266 (GPVDLNENSE…VTDTPKRSRR (248 aa)) are excised as a propeptide. 2 N-linked (GlcNAc...) asparagine glycosylation sites follow: Asn48 and Asn71. 4 disulfides stabilise this stretch: Cys272/Cys282, Cys281/Cys340, Cys309/Cys372, and Cys313/Cys374.

Belongs to the TGF-beta family. As to quaternary structure, homodimer; disulfide-linked. Interacts with WFIKKN2, leading to inhibit its activity. Interacts with FSTL3. Synthesized as large precursor molecule that undergoes proteolytic cleavage to generate an N-terminal propeptide and a disulfide linked C-terminal dimer, which is the biologically active molecule. The circulating form consists of a latent complex of the C-terminal dimer and other proteins, including its propeptide, which maintain the C-terminal dimer in a latent, inactive state. Ligand activation requires additional cleavage of the prodomain by a tolloid-like metalloproteinase.

It localises to the secreted. In terms of biological role, acts specifically as a negative regulator of skeletal muscle growth. This is Growth/differentiation factor 8 (MSTN) from Aepyceros melampus (Impala).